The sequence spans 366 residues: Aminomethyltransferase (366 aa).

This sequence belongs to the GcvT family. As to quaternary structure, the glycine cleavage system is composed of four proteins: P, T, L and H.

The catalysed reaction is N(6)-[(R)-S(8)-aminomethyldihydrolipoyl]-L-lysyl-[protein] + (6S)-5,6,7,8-tetrahydrofolate = N(6)-[(R)-dihydrolipoyl]-L-lysyl-[protein] + (6R)-5,10-methylene-5,6,7,8-tetrahydrofolate + NH4(+). Functionally, the glycine cleavage system catalyzes the degradation of glycine. This chain is Aminomethyltransferase, found in Bacillus cereus (strain ATCC 10987 / NRS 248).